A 150-amino-acid chain; its full sequence is Ribonuclease H (150 aa).

Residues 1–141 (MKFIEVHTDG…VDVLARNQAI (141 aa)) enclose the RNase H type-1 domain. Mg(2+) is bound by residues D9, E47, D69, and D133.

It belongs to the RNase H family. Monomer. The cofactor is Mg(2+).

The protein resides in the cytoplasm. The catalysed reaction is Endonucleolytic cleavage to 5'-phosphomonoester.. In terms of biological role, endonuclease that specifically degrades the RNA of RNA-DNA hybrids. The sequence is that of Ribonuclease H from Xanthomonas euvesicatoria pv. vesicatoria (strain 85-10) (Xanthomonas campestris pv. vesicatoria).